A 793-amino-acid chain; its full sequence is Protocadherin beta-7 (793 aa).

A signal peptide spans 1 to 26 (MEARVERAVQKRQVLFLCVFLGMSWA). Residues 27 to 688 (GAEPLRYFVA…DQANSLTVYL (662 aa)) are Extracellular-facing. Cadherin domains are found at residues 35–133 (VAEE…APVF), 138–242 (ISLK…APDF), 247–347 (YKVQ…RPEL), 352–451 (LTSP…APAF), and 456–561 (YTLF…SPFV). N-linked (GlcNAc...) asparagine glycosylation is present at Asn-169. 2 N-linked (GlcNAc...) asparagine glycosylation sites follow: Asn-418 and Asn-436. Asn-567 is a glycosylation site (N-linked (GlcNAc...) asparagine). One can recognise a Cadherin 6 domain in the interval 568-671 (SSAPCTEPLP…LVDGFSQPYL (104 aa)). The helical transmembrane segment at 689–709 (VVALASVSSLFLLSVLLFVAV) threads the bilayer. Over 710-793 (RLCRRSRAAP…NRPFQNNLGF (84 aa)) the chain is Cytoplasmic.

Its subcellular location is the cell membrane. Functionally, potential calcium-dependent cell-adhesion protein. May be involved in the establishment and maintenance of specific neuronal connections in the brain. The sequence is that of Protocadherin beta-7 (PCDHB7) from Homo sapiens (Human).